Consider the following 67-residue polypeptide: Probable Sec-independent protein translocase protein TatE (67 aa).

A helical membrane pass occupies residues 4 to 21 (ISITKLLVVAALVVLLFG).

The protein belongs to the TatA/E family. TatE subfamily.

The protein resides in the cell inner membrane. Its function is as follows. Part of the twin-arginine translocation (Tat) system that transports large folded proteins containing a characteristic twin-arginine motif in their signal peptide across membranes. TatE shares overlapping functions with TatA. The chain is Probable Sec-independent protein translocase protein TatE from Enterobacter cloacae subsp. cloacae (strain ATCC 13047 / DSM 30054 / NBRC 13535 / NCTC 10005 / WDCM 00083 / NCDC 279-56).